The following is a 294-amino-acid chain: 1D-myo-inositol 2-acetamido-2-deoxy-alpha-D-glucopyranoside deacetylase (294 aa).

The Zn(2+) site is built by His-15, Asp-18, and His-150.

It belongs to the MshB deacetylase family. It depends on Zn(2+) as a cofactor.

The enzyme catalyses 1D-myo-inositol 2-acetamido-2-deoxy-alpha-D-glucopyranoside + H2O = 1D-myo-inositol 2-amino-2-deoxy-alpha-D-glucopyranoside + acetate. Its function is as follows. Catalyzes the deacetylation of 1D-myo-inositol 2-acetamido-2-deoxy-alpha-D-glucopyranoside (GlcNAc-Ins) in the mycothiol biosynthesis pathway. The sequence is that of 1D-myo-inositol 2-acetamido-2-deoxy-alpha-D-glucopyranoside deacetylase from Streptomyces avermitilis (strain ATCC 31267 / DSM 46492 / JCM 5070 / NBRC 14893 / NCIMB 12804 / NRRL 8165 / MA-4680).